A 162-amino-acid chain; its full sequence is Phycoerythrocyanin alpha chain (162 aa).

C84 contacts (15Z)-phycoviolobilin.

The protein belongs to the phycobiliprotein family. In terms of assembly, heterodimer of an alpha and a beta chain. In terms of processing, contains one covalently linked bilin chromophore.

Its subcellular location is the cellular thylakoid membrane. In terms of biological role, light-harvesting photosynthetic bile pigment-protein from the phycobiliprotein complex. This chain is Phycoerythrocyanin alpha chain (pecA), found in Nostoc sp. (strain PCC 7120 / SAG 25.82 / UTEX 2576).